The chain runs to 377 residues: Queuine tRNA-ribosyltransferase (377 aa).

The active-site Proton acceptor is the D89. Substrate contacts are provided by residues 89–93 (DSGGF), D143, Q187, and G214. Residues 245 to 251 (GVGKPED) are RNA binding. The active-site Nucleophile is the D264. The interval 269-273 (TRNAR) is RNA binding; important for wobble base 34 recognition. Zn(2+)-binding residues include C302, C304, C307, and H333.

This sequence belongs to the queuine tRNA-ribosyltransferase family. Homodimer. Within each dimer, one monomer is responsible for RNA recognition and catalysis, while the other monomer binds to the replacement base PreQ1. Requires Zn(2+) as cofactor.

The enzyme catalyses 7-aminomethyl-7-carbaguanine + guanosine(34) in tRNA = 7-aminomethyl-7-carbaguanosine(34) in tRNA + guanine. It participates in tRNA modification; tRNA-queuosine biosynthesis. Catalyzes the base-exchange of a guanine (G) residue with the queuine precursor 7-aminomethyl-7-deazaguanine (PreQ1) at position 34 (anticodon wobble position) in tRNAs with GU(N) anticodons (tRNA-Asp, -Asn, -His and -Tyr). Catalysis occurs through a double-displacement mechanism. The nucleophile active site attacks the C1' of nucleotide 34 to detach the guanine base from the RNA, forming a covalent enzyme-RNA intermediate. The proton acceptor active site deprotonates the incoming PreQ1, allowing a nucleophilic attack on the C1' of the ribose to form the product. After dissociation, two additional enzymatic reactions on the tRNA convert PreQ1 to queuine (Q), resulting in the hypermodified nucleoside queuosine (7-(((4,5-cis-dihydroxy-2-cyclopenten-1-yl)amino)methyl)-7-deazaguanosine). The chain is Queuine tRNA-ribosyltransferase from Shewanella denitrificans (strain OS217 / ATCC BAA-1090 / DSM 15013).